Here is a 642-residue protein sequence, read N- to C-terminus: Threonine--tRNA ligase (642 aa).

Residues 1–61 (MPVITLPDGS…ETDVDLAIIT (61 aa)) enclose the TGS domain. The interval 243 to 534 (DHRKIGKQLD…LIEEYAGKFP (292 aa)) is catalytic. The Zn(2+) site is built by Cys334, His385, and His511.

This sequence belongs to the class-II aminoacyl-tRNA synthetase family. As to quaternary structure, homodimer. Requires Zn(2+) as cofactor.

The protein localises to the cytoplasm. The catalysed reaction is tRNA(Thr) + L-threonine + ATP = L-threonyl-tRNA(Thr) + AMP + diphosphate + H(+). Its function is as follows. Catalyzes the attachment of threonine to tRNA(Thr) in a two-step reaction: L-threonine is first activated by ATP to form Thr-AMP and then transferred to the acceptor end of tRNA(Thr). Also edits incorrectly charged L-seryl-tRNA(Thr). The protein is Threonine--tRNA ligase of Shewanella loihica (strain ATCC BAA-1088 / PV-4).